The chain runs to 596 residues: Elongation factor 4 (596 aa).

The tr-type G domain occupies 2–184 (KHIRNFSIIA…VIVEQIPPPE (183 aa)). Residues 14-19 (DHGKST) and 131-134 (NKID) contribute to the GTP site.

The protein belongs to the TRAFAC class translation factor GTPase superfamily. Classic translation factor GTPase family. LepA subfamily.

The protein localises to the cell inner membrane. The catalysed reaction is GTP + H2O = GDP + phosphate + H(+). Required for accurate and efficient protein synthesis under certain stress conditions. May act as a fidelity factor of the translation reaction, by catalyzing a one-codon backward translocation of tRNAs on improperly translocated ribosomes. Back-translocation proceeds from a post-translocation (POST) complex to a pre-translocation (PRE) complex, thus giving elongation factor G a second chance to translocate the tRNAs correctly. Binds to ribosomes in a GTP-dependent manner. The polypeptide is Elongation factor 4 (Shewanella piezotolerans (strain WP3 / JCM 13877)).